A 199-amino-acid chain; its full sequence is Prolactin-1 (199 aa).

Cystine bridges form between Cys-4/Cys-11, Cys-58/Cys-174, and Cys-191/Cys-199. Asn-60 carries N-linked (GlcNAc...) asparagine glycosylation.

Belongs to the somatotropin/prolactin family. Glycosylated.

The protein localises to the secreted. The chain is Prolactin-1 from Alligator mississippiensis (American alligator).